Here is a 448-residue protein sequence, read N- to C-terminus: MTTILKGLPTGEKVGIAFSGGLDTSAALLWMKQKGARCFAYTANLGQPDESDYDEIPRKAMSFGAEKARLVDCRTQLVHEGIAAIQSGAFHISTGGATYFNTTPLGRAVTGTMLVAAMKEDGVNIWGDGSTYKGNDIERFYRYGLLTNPNLKIYKPWLDQQFIDELGGRAEMSAFLTAHGFNYKMSAEKAYSTDSNLLGATHEAKDLESLSSGIRIVNPIMGVPFWREDCAVRPETVVVRFEEGQPVALNGQTFTDPVALFLEANAIGGRHGLGMCDQIENRIIEAKSRGIYEAPGMALLHIAYERLVTGIHNEDTIEQYRMSGMKLGRLLYQGRWFDSQALMLRETAQRWVASAITGEVTLELRRGNDYSLLNTESPNLTYQPERLSMEKVEDAAFTPADRIGQLTMRNLDITDTRTKLKLYSDTGLLSGAEGAQIFQLGHDKGDKS.

Residues 17–25 and A43 contribute to the ATP site; that span reads AFSGGLDTS. Y99 serves as a coordination point for L-citrulline. ATP is bound by residues G129 and T131. L-aspartate is bound by residues T131, N135, and D136. N135 is a binding site for L-citrulline. D136 serves as a coordination point for ATP. L-citrulline-binding residues include R139 and S192. D194 is an ATP binding site. L-citrulline is bound by residues T201, E203, and E280.

It belongs to the argininosuccinate synthase family. Type 2 subfamily. As to quaternary structure, homotetramer.

The protein localises to the cytoplasm. It catalyses the reaction L-citrulline + L-aspartate + ATP = 2-(N(omega)-L-arginino)succinate + AMP + diphosphate + H(+). It functions in the pathway amino-acid biosynthesis; L-arginine biosynthesis; L-arginine from L-ornithine and carbamoyl phosphate: step 2/3. The chain is Argininosuccinate synthase from Bradyrhizobium sp. (strain ORS 278).